Reading from the N-terminus, the 714-residue chain is Forkhead box protein P2 (714 aa).

The segment covering 1–28 (MMQESATETISNSSMNQNGMSTLSSQLD) has biased composition (polar residues). 2 disordered regions span residues 1-45 (MMQE…SEVS) and 280-338 (DNGI…TGAS). Residues 291–304 (TTNNSSSTTSSTTS) are compositionally biased toward low complexity. The span at 314 to 323 (SIVNGQSSVL) shows a compositional bias: polar residues. Over residues 325–336 (ARRDSSSHEETG) the composition is skewed to basic and acidic residues. Residues 345–370 (GVCKWPGCESICEDFGQFLKHLNNEH) form a C2H2-type zinc finger. Positions 387 to 408 (VQQLEIQLSKERERLQAMMTHL) are leucine-zipper. The CTBP1-binding stretch occupies residues 421–425 (PLNLV). Residues 437–458 (TSPQSLPQTPTTPTAPVTPITQ) are compositionally biased toward low complexity. The interval 437–464 (TSPQSLPQTPTTPTAPVTPITQGPSVIT) is disordered. The fork-head DNA-binding region spans 503-593 (RPPFTYATLI…SQKITGSPTL (91 aa)). 2 disordered regions span residues 648–667 (LDHI…QPHI) and 677–714 (VIAE…EDLE). Acidic residues predominate over residues 698-714 (LEDDREIEEEPLSEDLE).

As to quaternary structure, forms homodimers and heterodimers with FOXP1 and FOXP4. Dimerization is required for DNA-binding. Interacts with CTBP1. Interacts with FOXP1. Interacts with TBR1. Interacts with ZMYM2. Highest expression in lung. Lower expression in spleen, skeletal muscle, brain, kidney and small intestine.

Its subcellular location is the nucleus. Transcriptional repressor that may play a role in the specification and differentiation of lung epithelium. May also play a role in developing neural, gastrointestinal and cardiovascular tissues. Can act with CTBP1 to synergistically repress transcription but CTPBP1 is not essential. Plays a role in synapse formation by regulating SRPX2 levels. The chain is Forkhead box protein P2 (Foxp2) from Mus musculus (Mouse).